The chain runs to 428 residues: 5-methylthioadenosine/S-adenosylhomocysteine deaminase (428 aa).

Residues histidine 65 and histidine 67 each contribute to the Zn(2+) site. Positions 94, 158, and 184 each coordinate substrate. Histidine 211 lines the Zn(2+) pocket. Substrate-binding residues include glutamate 214 and aspartate 299. A Zn(2+)-binding site is contributed by aspartate 299.

Belongs to the metallo-dependent hydrolases superfamily. MTA/SAH deaminase family. Requires Zn(2+) as cofactor.

It catalyses the reaction S-adenosyl-L-homocysteine + H2O + H(+) = S-inosyl-L-homocysteine + NH4(+). The catalysed reaction is S-methyl-5'-thioadenosine + H2O + H(+) = S-methyl-5'-thioinosine + NH4(+). Functionally, catalyzes the deamination of 5-methylthioadenosine and S-adenosyl-L-homocysteine into 5-methylthioinosine and S-inosyl-L-homocysteine, respectively. Is also able to deaminate adenosine. The polypeptide is 5-methylthioadenosine/S-adenosylhomocysteine deaminase (Moorella thermoacetica (strain ATCC 39073 / JCM 9320)).